We begin with the raw amino-acid sequence, 48 residues long: uncharacterized protein (48 aa).

This is an uncharacterized protein from Escherichia coli (Bacteriophage HK022).